Consider the following 730-residue polypeptide: MGRRKKMVERVTTLMNDPQRIRNIGIVAHIDHGKTTLSDNLLAGAGMISKELAGKQLFMDSDEEEQARGITIDSSNVSMVHTFDNEDYLINLIDTPGHVDFGGDVTRAMRAVDGAVVVVDAVEGTMPQTETVLRQALREHVRPVLFVNKVDRLINELQVDSQEMQIRLGKVIDHVNKLIKNMNPEKFKAGWKVDAAAGTVAFGSALYNWAISVPMMKKTGVSFKDVYDYCKAGDMKSLAEKCPLHEAVLDMVIHFLPNPIEAQKGRVKVIWHGDENTEIGKAMTHANAEGDLAFMVTDISVDPHAGEVATGRLFSGSLTRGMEVFTSGSARKSRVQQVGIFMGPERLEVDKIPAGNIAAVTGLKEAIVGSTVTTLDGMTPFESIRHVSEPVVTVAVEAKHTKDLPKLIEVLRQVAKEDPTLQITLDEETGEHLMAGMGELHLEVIAHRIERDKNVEITTSKPIVVYRETIKKKTEPIEGKSPNRHNRFYIYAEPLDTEIVSAIKEGEVSMNLPELERRQKLIDLGMEKEEAKGIVGIFNSNIFIDMTKGIQYLNETMELVLDGFEEVMRAGPLTREPVANVKCVLVDAKLHEDAIHRGPAQIIPAARQAIQAGMLMAEDSLLEPYQKVFVQVPQLLMGGATKELQGRRGIILNMTTEGDLAIIEARVPVAEMFGFAGEIRSATEGRAMWSTEFGGFDVVPSSILNDIVGQIRERKGLKKELPKASDFLSM.

The 210-residue stretch at 19 to 228 (QRIRNIGIVA…TGVSFKDVYD (210 aa)) folds into the tr-type G domain. Residues 28-35 (AHIDHGKT), 94-98 (DTPGH), and 148-151 (NKVD) each bind GTP. At H596 the chain carries Diphthamide.

It belongs to the TRAFAC class translation factor GTPase superfamily. Classic translation factor GTPase family. EF-G/EF-2 subfamily.

Its subcellular location is the cytoplasm. In terms of biological role, catalyzes the GTP-dependent ribosomal translocation step during translation elongation. During this step, the ribosome changes from the pre-translocational (PRE) to the post-translocational (POST) state as the newly formed A-site-bound peptidyl-tRNA and P-site-bound deacylated tRNA move to the P and E sites, respectively. Catalyzes the coordinated movement of the two tRNA molecules, the mRNA and conformational changes in the ribosome. The sequence is that of Elongation factor 2 from Methanosarcina acetivorans (strain ATCC 35395 / DSM 2834 / JCM 12185 / C2A).